A 629-amino-acid chain; its full sequence is tRNA uridine 5-carboxymethylaminomethyl modification enzyme MnmG (629 aa).

FAD is bound by residues 13 to 18 (GGGHAG), V125, and S180. Residue 273-287 (GPRYCPSIEDKVMRF) participates in NAD(+) binding. Residue Q370 participates in FAD binding.

This sequence belongs to the MnmG family. As to quaternary structure, homodimer. Heterotetramer of two MnmE and two MnmG subunits. FAD serves as cofactor.

It is found in the cytoplasm. Functionally, NAD-binding protein involved in the addition of a carboxymethylaminomethyl (cmnm) group at the wobble position (U34) of certain tRNAs, forming tRNA-cmnm(5)s(2)U34. In Salmonella arizonae (strain ATCC BAA-731 / CDC346-86 / RSK2980), this protein is tRNA uridine 5-carboxymethylaminomethyl modification enzyme MnmG.